The primary structure comprises 473 residues: Chromosomal replication initiator protein DnaA (473 aa).

The interval Met-1–Val-87 is domain I, interacts with DnaA modulators. Positions Val-87–Thr-132 are domain II. Residues Arg-133 to Ala-349 form a domain III, AAA+ region region. Gly-177, Gly-179, Lys-180, and Thr-181 together coordinate ATP. The interval Ser-350–Arg-473 is domain IV, binds dsDNA.

The protein belongs to the DnaA family. Oligomerizes as a right-handed, spiral filament on DNA at oriC.

Its subcellular location is the cytoplasm. In terms of biological role, plays an essential role in the initiation and regulation of chromosomal replication. ATP-DnaA binds to the origin of replication (oriC) to initiate formation of the DNA replication initiation complex once per cell cycle. Binds the DnaA box (a 9 base pair repeat at the origin) and separates the double-stranded (ds)DNA. Forms a right-handed helical filament on oriC DNA; dsDNA binds to the exterior of the filament while single-stranded (ss)DNA is stabiized in the filament's interior. The ATP-DnaA-oriC complex binds and stabilizes one strand of the AT-rich DNA unwinding element (DUE), permitting loading of DNA polymerase. After initiation quickly degrades to an ADP-DnaA complex that is not apt for DNA replication. Binds acidic phospholipids. The protein is Chromosomal replication initiator protein DnaA of Leifsonia xyli subsp. xyli (strain CTCB07).